An 89-amino-acid chain; its full sequence is Small ribosomal subunit protein uS15 (89 aa).

It belongs to the universal ribosomal protein uS15 family. As to quaternary structure, part of the 30S ribosomal subunit. Forms a bridge to the 50S subunit in the 70S ribosome, contacting the 23S rRNA.

Its function is as follows. One of the primary rRNA binding proteins, it binds directly to 16S rRNA where it helps nucleate assembly of the platform of the 30S subunit by binding and bridging several RNA helices of the 16S rRNA. In terms of biological role, forms an intersubunit bridge (bridge B4) with the 23S rRNA of the 50S subunit in the ribosome. The sequence is that of Small ribosomal subunit protein uS15 from Cyanothece sp. (strain PCC 7425 / ATCC 29141).